A 310-amino-acid chain; its full sequence is Putative HTH-type transcriptional regulatory protein SSO0942 (310 aa).

One can recognise an HTH cro/C1-type domain in the interval Leu-125 to Val-180. Residues Ile-136 to Lys-155 constitute a DNA-binding region (H-T-H motif).

The polypeptide is Putative HTH-type transcriptional regulatory protein SSO0942 (Saccharolobus solfataricus (strain ATCC 35092 / DSM 1617 / JCM 11322 / P2) (Sulfolobus solfataricus)).